Reading from the N-terminus, the 510-residue chain is 2,3-bisphosphoglycerate-independent phosphoglycerate mutase (510 aa).

Asp12 and Ser62 together coordinate Mn(2+). Catalysis depends on Ser62, which acts as the Phosphoserine intermediate. Residues His123, 153-154 (RD), Arg185, Arg191, 261-264 (RPDR), and Lys336 each bind substrate. Mn(2+) contacts are provided by Asp403, His407, Asp444, His445, and His462.

This sequence belongs to the BPG-independent phosphoglycerate mutase family. In terms of assembly, monomer. It depends on Mn(2+) as a cofactor.

It carries out the reaction (2R)-2-phosphoglycerate = (2R)-3-phosphoglycerate. It participates in carbohydrate degradation; glycolysis; pyruvate from D-glyceraldehyde 3-phosphate: step 3/5. In terms of biological role, essential for rapid growth and for sporulation. Catalyzes the interconversion of 2-phosphoglycerate and 3-phosphoglycerate. The sequence is that of 2,3-bisphosphoglycerate-independent phosphoglycerate mutase from Priestia megaterium (strain ATCC 12872 / QMB1551) (Bacillus megaterium).